A 353-amino-acid polypeptide reads, in one-letter code: 3-deoxy-D-manno-octulosonic acid transferase (353 aa).

Glu31 functions as the Proton acceptor in the catalytic mechanism. CMP-binding positions include 211-212 (PR), 247-249 (FGI), and 273-276 (NLLE).

The protein belongs to the glycosyltransferase group 1 family. Glycosyltransferase 30 subfamily. Can form homodimer, homotrimer and homotetramer.

It is found in the cell inner membrane. It catalyses the reaction lipid IVA (E. coli) + CMP-3-deoxy-beta-D-manno-octulosonate = alpha-Kdo-(2-&gt;6)-lipid IVA (E. coli) + CMP + H(+). Its pathway is bacterial outer membrane biogenesis; LPS core biosynthesis. Its function is as follows. Involved in lipopolysaccharide (LPS) biosynthesis. Catalyzes the transfer of a single 3-deoxy-D-manno-octulosonate (Kdo) residue from CMP-Kdo to lipid IV(A), the tetraacyldisaccharide-1,4'-bisphosphate precursor of lipid A. Is strictly monofunctional, i.e. is capable of adding only a single Kdo residue to the acceptor lipid. The chain is 3-deoxy-D-manno-octulosonic acid transferase (kdtA) from Aquifex aeolicus (strain VF5).